A 320-amino-acid polypeptide reads, in one-letter code: MVLHSKVAIVGAGAVGASTAYALMFKNICTEIIIVDVNPDIVQAQVLDLADAASISHTPIRAGSAEEAGQADIVVITAGAKQREGEPRTKLIERNFRVLQSIIGGMQPIRPDAVILVVANPVDILTHIAKTLSGLPPNQVIGSGTYLDTTRLRVHLGDVFDVNPQSVHAFVLGEHGDSQMIAWEAASIGGQPLTSFPEFAKLDKTAISKAISGKAMEIIRLKGATFYGIGACAADLVHTIMLNRKSVHPVSVYVEKYGATFSMPAKLGWRGVEQIYEVPLTEEEEALLVKSVEALKSVEYSSTKVPEKKVHATSFSKSSC.

Residues R88, N120, and R151 each contribute to the substrate site. Position 120 (N120) interacts with NAD(+). H175 acts as the Proton acceptor in catalysis.

It belongs to the LDH/MDH superfamily. LDH family. In terms of assembly, homotetramer.

Its subcellular location is the cytoplasm. The catalysed reaction is (S)-lactate + NAD(+) = pyruvate + NADH + H(+). The protein operates within fermentation; pyruvate fermentation to lactate; (S)-lactate from pyruvate: step 1/1. Its function is as follows. Converts pyruvate to lactate. The sequence is that of L-lactate dehydrogenase A (LDHA) from Rhizopus oryzae (Mucormycosis agent).